A 785-amino-acid chain; its full sequence is Transcription factor Sp1 (785 aa).

A disordered region spans residues 1–93 (MSDQDHSMDE…PSQSGGTGEL (93 aa)). Position 2 is an N-acetylserine (Ser2). A phosphoserine mark is found at Ser2 and Ser7. Residues 2–82 (SDQDHSMDEM…SPNENSNNSQ (81 aa)) are repressor domain. Lys16 participates in a covalent cross-link: Glycyl lysine isopeptide (Lys-Gly) (interchain with G-Cter in SUMO); alternate. Residue Lys16 forms a Glycyl lysine isopeptide (Lys-Gly) (interchain with G-Cter in SUMO2); alternate linkage. A compositionally biased stretch (gly residues) spans 20–34 (GVGGNNGGNGNGGGA). A Phosphoserine modification is found at Ser59. A compositionally biased stretch (low complexity) spans 72 to 85 (ESPNENSNNSQGPS). The residue at position 101 (Ser101) is a Phosphoserine; by ATM. The span at 109-123 (IISSSSGATPTSKEQ) shows a compositional bias: polar residues. Residues 109–141 (IISSSSGATPTSKEQSGSSTNGSNGSESSKNRT) are disordered. The span at 124 to 136 (SGSSTNGSNGSES) shows a compositional bias: low complexity. Residues 146 to 251 (QYVVAAAPNL…ANNVLSGQTQ (106 aa)) form a transactivation domain A (Gln-rich) region. A transactivation domain B (Gln-rich) region spans residues 261–495 (NGNITLLPVN…PMQGVSLGQT (235 aa)). Thr278 carries the post-translational modification Phosphothreonine; by MAPK8. The segment at 329-395 (TTTTTSNMGI…KEGEQNQQTQ (67 aa)) is disordered. Low complexity predominate over residues 342–357 (TTSGSSGTNSQGQTPQ). Residues 358-379 (RVSGLQGSDALNIQQNQTSGGS) show a composition bias toward polar residues. Residues 381 to 395 (QAGQQKEGEQNQQTQ) are compositionally biased toward low complexity. Residue Thr453 is modified to Phosphothreonine; by MAPK1 and MAPK3. The 9aaTAD motif lies at 462 to 470 (VSWQTLQLQ). Ser491 is a glycosylation site (O-linked (GlcNAc) serine). A transactivation domain C (highly charged) region spans residues 496–610 (SSSNTTLTPI…REACTCPYCK (115 aa)). The disordered stretch occupies residues 567-598 (LHGAGGDGIHDDTAGGEEGENSPDAQPQAGRR). At Ser612 the chain carries Phosphoserine; alternate. Ser612 is a glycosylation site (O-linked (GlcNAc) serine; alternate). The segment at 619–785 (DPGKKKQHIC…QSINISGNGF (167 aa)) is VZV IE62-binding. The C2H2-type 1 zinc finger occupies 626 to 650 (HICHIQGCGKVYGKTSHLRAHLRWH). Phosphothreonine; alternate is present on Thr640. An O-linked (GlcNAc) threonine; alternate glycan is attached at Thr640. O-linked (GlcNAc) serine; alternate glycosylation is present at Ser641. Ser641 carries the phosphoserine; by PKC/PRKCZ; alternate modification. At Thr651 the chain carries Phosphothreonine; by PKC/PRKCZ. The C2H2-type 2 zinc-finger motif lies at 656 to 680 (FMCTWSYCGKRFTRSDELQRHKRTH). Thr668 is subject to Phosphothreonine. Residue Ser670 is modified to Phosphoserine; by PKC/PRKCZ. At Thr681 the chain carries Phosphothreonine; by PKC/PRKCZ. A C2H2-type 3 zinc finger spans residues 686-708 (FACPECPKRFMRSDHLSKHIKTH). A phosphoserine; alternate mark is found at Ser698 and Ser702. O-linked (GlcNAc) serine; alternate glycans are attached at residues Ser698 and Ser702. Lys703 is modified (N6-acetyllysine). Positions 708–785 (HQNKKGGPGV…QSINISGNGF (78 aa)) are domain D. Thr739 carries the phosphothreonine; by MAPK1, MAPK3 and MAPK8 modification.

It belongs to the Sp1 C2H2-type zinc-finger protein family. In terms of assembly, interacts with ATF7IP, ATF7IP2, BAHD1, POGZ, HCFC1, AATF and PHC2. Interacts with HLTF; the interaction may be required for basal transcriptional activity of HLTF. Interacts (deacetylated form) with EP300; the interaction enhances gene expression. Interacts with HDAC1 and JUN. Interacts with ELF1; the interaction is inhibited by glycosylation of SP1. Interaction with NFYA; the interaction is inhibited by glycosylation of SP1. Interacts with ATF7IP and TBP. Interacts with MEIS2 isoform 4 and PBX1 isoform PBX1a. Interacts with EGR1. Interacts with SMARCA4/BRG1. Interacts with RNF112 in an oxidative stress-regulated manner. Interacts with ZBTB7A; ZBTB7A prevents the binding to GC-rich motifs in promoters and represses the transcriptional activity of SP1. Interacts with DDX3X; this interaction potentiates SP1-induced CDKN1A/WAF1/CIP1 transcription. Interacts with MSX1; the interaction may inhibit MSX1 autoinactivation. (Microbial infection) Interacts with varicella-zoster virus IE62 protein. As to quaternary structure, (Microbial infection) Interacts with SV40 VP2/3 proteins. Interacts with SV40 major capsid protein VP1; this interaction leads to a cooperativity between the 2 proteins in DNA binding. In terms of assembly, (Microbial infection) Interacts with HIV-1 Vpr; the interaction is inhibited by SP1 O-glycosylation. Post-translationally, phosphorylated on multiple serine and threonine residues. Phosphorylation is coupled to ubiquitination, sumoylation and proteolytic processing. Phosphorylation on Ser-59 enhances proteolytic cleavage. Phosphorylation on Ser-7 enhances ubiquitination and protein degradation. Hyperphosphorylation on Ser-101 in response to DNA damage has no effect on transcriptional activity. MAPK1/MAPK3-mediated phosphorylation on Thr-453 and Thr-739 enhances VEGF transcription but, represses FGF2-triggered PDGFR-alpha transcription. Also implicated in the repression of RECK by ERBB2. Hyperphosphorylated on Thr-278 and Thr-739 during mitosis by MAPK8 shielding SP1 from degradation by the ubiquitin-dependent pathway. Phosphorylated in the zinc-finger domain by calmodulin-activated PKCzeta. Phosphorylation on Ser-641 by PKCzeta is critical for TSA-activated LHR gene expression through release of its repressor, p107. Phosphorylation on Thr-668, Ser-670 and Thr-681 is stimulated by angiotensin II via the AT1 receptor inducing increased binding to the PDGF-D promoter. This phosphorylation is increased in injured artey wall. Ser-59 and Thr-681 can both be dephosphorylated by PP2A during cell-cycle interphase. Dephosphorylation on Ser-59 leads to increased chromatin association during interphase and increases the transcriptional activity. On insulin stimulation, sequentially glycosylated and phosphorylated on several C-terminal serine and threonine residues. In terms of processing, acetylated. Acetylation/deacetylation events affect transcriptional activity. Deacetylation leads to an increase in the expression of the 12(s)-lipooxygenase gene through recruitment of p300 to the promoter. Deacetylated by HDAC6 which leads to increased expression of ENG and positive regulation of angiogenesis. Ubiquitinated. Ubiquitination occurs on the C-terminal proteolytically-cleaved peptide and is triggered by phosphorylation. Post-translationally, sumoylated with SUMO1. Sumoylation modulates proteolytic cleavage of the N-terminal repressor domain. Sumoylation levels are attenuated during tumorigenesis. Phosphorylation mediates SP1 desumoylation. In terms of processing, proteolytic cleavage in the N-terminal repressor domain is prevented by sumoylation. The C-terminal cleaved product is susceptible to degradation. O-glycosylated; Contains 8 N-acetylglucosamine side chains. Levels are controlled by insulin and the SP1 phosphorylation states. Insulin-mediated O-glycosylation locates SP1 to the nucleus, where it is sequentially deglycosylated and phosphorylated. O-glycosylation affects transcriptional activity through disrupting the interaction with a number of transcription factors including ELF1 and NFYA. Also inhibits interaction with the HIV1 promoter. Inhibited by peroxisomome proliferator receptor gamma (PPARgamma). In terms of tissue distribution, up-regulated in adenocarcinomas of the stomach (at protein level). Isoform 3 is ubiquitously expressed at low levels.

Its subcellular location is the nucleus. It is found in the cytoplasm. Functionally, transcription factor that can activate or repress transcription in response to physiological and pathological stimuli. Binds with high affinity to GC-rich motifs and regulates the expression of a large number of genes involved in a variety of processes such as cell growth, apoptosis, differentiation and immune responses. Highly regulated by post-translational modifications (phosphorylations, sumoylation, proteolytic cleavage, glycosylation and acetylation). Also binds the PDGFR-alpha G-box promoter. May have a role in modulating the cellular response to DNA damage. Implicated in chromatin remodeling. Plays an essential role in the regulation of FE65 gene expression. In complex with ATF7IP, maintains telomerase activity in cancer cells by inducing TERT and TERC gene expression. Isoform 3 is a stronger activator of transcription than isoform 1. Positively regulates the transcription of the core clock component BMAL1. Plays a role in the recruitment of SMARCA4/BRG1 on the c-FOS promoter. Plays a role in protecting cells against oxidative stress following brain injury by regulating the expression of RNF112. The protein is Transcription factor Sp1 (SP1) of Homo sapiens (Human).